The primary structure comprises 293 residues: Hydroxyquinol 1,2-dioxygenase (293 aa).

Fe cation contacts are provided by Tyr164, Tyr197, His221, and His223.

This sequence belongs to the intradiol ring-cleavage dioxygenase family. As to quaternary structure, homodimer. Fe(3+) serves as cofactor.

The catalysed reaction is benzene-1,2,4-triol + O2 = maleylacetate + 2 H(+). Its pathway is aromatic compound metabolism; beta-ketoadipate pathway; 3-oxoadipate from 3,4-dihydroxybenzoate: step 2/4. With respect to regulation, inhibited by 3,5-dichlorocatechol, chlorohydroquinone and 4,5-dibromocatechol. Its function is as follows. Catalyzes the ortho-cleavage of the aromatic ring of hydroxyquinol. This is Hydroxyquinol 1,2-dioxygenase (chqB) from Nocardioides simplex (Arthrobacter simplex).